Consider the following 84-residue polypeptide: U4-theraphotoxin-Hhn1a (84 aa).

The first 22 residues, 1 to 22 (MKVTLIAILTCAAVLVLHTTAA), serve as a signal peptide directing secretion. A propeptide spanning residues 23-47 (EELEESQLMEVGMPDTELAAVDGER) is cleaved from the precursor. 3 disulfides stabilise this stretch: Cys-51/Cys-65, Cys-55/Cys-76, and Cys-70/Cys-81.

Belongs to the neurotoxin 12 (Hwtx-2) family. 02 (Hwtx-2) subfamily. In terms of tissue distribution, expressed by the venom gland.

It is found in the secreted. Functionally, postsynaptic neurotoxin. The polypeptide is U4-theraphotoxin-Hhn1a (Cyriopagopus hainanus (Chinese bird spider)).